The chain runs to 552 residues: Berberine bridge enzyme-like 6 (552 aa).

The signal sequence occupies residues 1–16 (MKEAFVFLLCLTNKFP). The cysteines at positions 56 and 119 are disulfide-linked. N-linked (GlcNAc...) asparagine glycosylation is found at Asn76, Asn161, Asn280, Asn364, Asn419, and Asn463. In terms of domain architecture, FAD-binding PCMH-type spans 93 to 270 (FSSPNFKKLL…LSWKINLVEV (178 aa)). Positions 134-196 (HDNEGFSYMS…QTLAFPAGVC (63 aa)) form a cross-link, 6-(S-cysteinyl)-8alpha-(pros-histidyl)-FAD (His-Cys).

It belongs to the oxygen-dependent FAD-linked oxidoreductase family. FAD is required as a cofactor. In terms of processing, the FAD cofactor is bound via a bicovalent 6-S-cysteinyl, 8alpha-N1-histidyl FAD linkage.

Its subcellular location is the secreted. It is found in the cell wall. Its function is as follows. Probable flavin-dependent oxidoreductase. The polypeptide is Berberine bridge enzyme-like 6 (Arabidopsis thaliana (Mouse-ear cress)).